A 404-amino-acid chain; its full sequence is Cysteine desulfurase IscS (404 aa).

Pyridoxal 5'-phosphate contacts are provided by residues 75-76 (AT), Asn155, Gln183, and 203-205 (SAH). Lys206 is subject to N6-(pyridoxal phosphate)lysine. Thr243 lines the pyridoxal 5'-phosphate pocket. Cys328 (cysteine persulfide intermediate) is an active-site residue. Cys328 provides a ligand contact to [2Fe-2S] cluster.

This sequence belongs to the class-V pyridoxal-phosphate-dependent aminotransferase family. NifS/IscS subfamily. As to quaternary structure, homodimer. Forms a heterotetramer with IscU, interacts with other sulfur acceptors. Pyridoxal 5'-phosphate serves as cofactor.

It is found in the cytoplasm. It catalyses the reaction (sulfur carrier)-H + L-cysteine = (sulfur carrier)-SH + L-alanine. It participates in cofactor biosynthesis; iron-sulfur cluster biosynthesis. In terms of biological role, master enzyme that delivers sulfur to a number of partners involved in Fe-S cluster assembly, tRNA modification or cofactor biosynthesis. Catalyzes the removal of elemental sulfur atoms from cysteine to produce alanine. Functions as a sulfur delivery protein for Fe-S cluster synthesis onto IscU, an Fe-S scaffold assembly protein, as well as other S acceptor proteins. This Vibrio campbellii (strain ATCC BAA-1116) protein is Cysteine desulfurase IscS.